A 175-amino-acid chain; its full sequence is MDIDLHDYIATTPDFPEKGVMFRDINPLIGNGPAYRQAINELIDFARPLKPDIIAGPEARGFVVGSPMAYALGIGFVPARKYGKLPRKSVSSSYSLEYGKNELQMHVDSIKPGQRVFIVDDLLATGGTITATMDLVRQLGGQVVGTGFFIELADLQGRKKIMEVENVPFKSLLEY.

Belongs to the purine/pyrimidine phosphoribosyltransferase family. Homodimer.

It localises to the cytoplasm. It carries out the reaction AMP + diphosphate = 5-phospho-alpha-D-ribose 1-diphosphate + adenine. Its pathway is purine metabolism; AMP biosynthesis via salvage pathway; AMP from adenine: step 1/1. Its function is as follows. Catalyzes a salvage reaction resulting in the formation of AMP, that is energically less costly than de novo synthesis. The chain is Adenine phosphoribosyltransferase from Oenococcus oeni (strain ATCC BAA-331 / PSU-1).